The sequence spans 155 residues: DNA gyrase inhibitor (155 aa).

Belongs to the DNA gyrase inhibitor family. In terms of assembly, interacts with DNA gyrase.

It localises to the cytoplasm. In terms of biological role, inhibits the supercoiling activity of DNA gyrase. Acts by inhibiting DNA gyrase at an early step, prior to (or at the step of) binding of DNA by the gyrase. It protects cells against toxins that target DNA gyrase, by inhibiting activity of these toxins and reducing the formation of lethal double-strand breaks in the cell. The sequence is that of DNA gyrase inhibitor from Escherichia fergusonii (strain ATCC 35469 / DSM 13698 / CCUG 18766 / IAM 14443 / JCM 21226 / LMG 7866 / NBRC 102419 / NCTC 12128 / CDC 0568-73).